The chain runs to 357 residues: Nicotinate-nucleotide--dimethylbenzimidazole phosphoribosyltransferase (357 aa).

The active-site Proton acceptor is the E323.

The protein belongs to the CobT family.

It catalyses the reaction 5,6-dimethylbenzimidazole + nicotinate beta-D-ribonucleotide = alpha-ribazole 5'-phosphate + nicotinate + H(+). Its pathway is nucleoside biosynthesis; alpha-ribazole biosynthesis; alpha-ribazole from 5,6-dimethylbenzimidazole: step 1/2. Functionally, catalyzes the synthesis of alpha-ribazole-5'-phosphate from nicotinate mononucleotide (NAMN) and 5,6-dimethylbenzimidazole (DMB). This is Nicotinate-nucleotide--dimethylbenzimidazole phosphoribosyltransferase from Nitratidesulfovibrio vulgaris (strain DP4) (Desulfovibrio vulgaris).